A 219-amino-acid polypeptide reads, in one-letter code: Membrin-12 (219 aa).

An N-acetylalanine modification is found at Ala2. Residues 2 to 197 (ASGTVGGLSE…LIERRNRVDT (196 aa)) are Cytoplasmic-facing. The helical; Anchor for type IV membrane protein transmembrane segment at 198 to 215 (WIKYAGMIATLVILYLFI) threads the bilayer. At 216–219 (RWTR) the chain is on the vesicular side.

It belongs to the GOSR2 family.

The protein localises to the golgi apparatus membrane. Involved in transport of proteins from the cis/medial-Golgi to the trans-Golgi network. This Arabidopsis thaliana (Mouse-ear cress) protein is Membrin-12 (MEMB12).